A 785-amino-acid polypeptide reads, in one-letter code: LPS-assembly protein LptD (785 aa).

The N-terminal stretch at 1–58 is a signal peptide; sequence MSCSCLCMSLYRGADRIGRFYTAHCPQDMALCMHRQKLNPLALALAAAFALNAPAALA.

The protein belongs to the LptD family. As to quaternary structure, component of the lipopolysaccharide transport and assembly complex. Interacts with LptE and LptA.

It localises to the cell outer membrane. Its function is as follows. Together with LptE, is involved in the assembly of lipopolysaccharide (LPS) at the surface of the outer membrane. This chain is LPS-assembly protein LptD, found in Chromobacterium violaceum (strain ATCC 12472 / DSM 30191 / JCM 1249 / CCUG 213 / NBRC 12614 / NCIMB 9131 / NCTC 9757 / MK).